The chain runs to 129 residues: NADH-quinone oxidoreductase subunit A (129 aa).

Helical transmembrane passes span 14–34 (LAIH…VAAL), 67–87 (FLIA…FAWA), and 95–115 (WFGL…LVYL).

Belongs to the complex I subunit 3 family. NDH-1 is composed of 14 different subunits. Subunits NuoA, H, J, K, L, M, N constitute the membrane sector of the complex.

It localises to the cell inner membrane. It carries out the reaction a quinone + NADH + 5 H(+)(in) = a quinol + NAD(+) + 4 H(+)(out). NDH-1 shuttles electrons from NADH, via FMN and iron-sulfur (Fe-S) centers, to quinones in the respiratory chain. The immediate electron acceptor for the enzyme in this species is believed to be ubiquinone. Couples the redox reaction to proton translocation (for every two electrons transferred, four hydrogen ions are translocated across the cytoplasmic membrane), and thus conserves the redox energy in a proton gradient. This Rhodopseudomonas palustris (strain HaA2) protein is NADH-quinone oxidoreductase subunit A.